A 294-amino-acid polypeptide reads, in one-letter code: Non-selective voltage-gated ion channel VDAC2 (294 aa).

Ala-2 bears the N-acetylalanine mark. ATP is bound by residues Lys-23 and Lys-31. At Lys-31 the chain carries N6-acetyllysine; alternate. The residue at position 31 (Lys-31) is an N6-succinyllysine; alternate. Residue Lys-31 forms a Glycyl lysine isopeptide (Lys-Gly) (interchain with G-Cter in ubiquitin); alternate linkage. 2 beta stranded membrane passes run 37–46 (LVKLDVKTKS) and 50–58 (VEFSTSGSS). Lys-64 participates in a covalent cross-link: Glycyl lysine isopeptide (Lys-Gly) (interchain with G-Cter in ubiquitin). The chain crosses the membrane as a beta stranded span at residues 65-75 (VTGTLETKYKW). Tyr-78 carries the post-translational modification Phosphotyrosine. 3 consecutive transmembrane segments (beta stranded) span residues 80-87 (LTFTEKWN), 91-100 (TLGTEIAIED), and 106-115 (LKLTFDTTFS). Thr-118 is modified (phosphothreonine). Lys-120 carries the post-translational modification N6-acetyllysine; alternate. A Glycyl lysine isopeptide (Lys-Gly) (interchain with G-Cter in ubiquitin); alternate cross-link involves residue Lys-120. Lys-121 is covalently cross-linked (Glycyl lysine isopeptide (Lys-Gly) (interchain with G-Cter in ubiquitin)). The next 4 beta stranded transmembrane spans lie at 122-131 (SGKIKSSYKR), 134-141 (INLGCDVD), 148-156 (AIHGSAVFG), and 161-169 (LAGYQMTFD). A Glycyl lysine isopeptide (Lys-Gly) (interchain with G-Cter in ubiquitin) cross-link involves residue Lys-172. 6 beta stranded membrane passes run 174 to 186 (KLTRNNFAVGYRT), 189 to 196 (FQLHTNVN), 200 to 209 (EFGGSIYQKV), 213 to 222 (LDTSVNLAWT), 229 to 238 (RFGIAAKYQL), and 242 to 249 (ASISAKVN). Position 251 is a phosphoserine (Ser-251). Residues 253–255 (LIG) and 271–275 (SALVD) each bind NAD(+). 2 beta stranded membrane passes run 253-262 (LIGVGYTQTL) and 265-274 (GVKLTLSALV). Lys-277 bears the N6-acetyllysine; alternate mark. Lys-277 is covalently cross-linked (Glycyl lysine isopeptide (Lys-Gly) (interchain with G-Cter in ubiquitin); alternate). The beta stranded transmembrane segment at 284–293 (HKLGLALELE) threads the bilayer.

Belongs to the eukaryotic mitochondrial porin family. Monomer, homodimer and higher order oligomers; formation of higher order structures is necessary for scramblase activity. Interacts with ARMC12 in a TBC1D21-dependent manner. Interacts with KLC3. Interacts with SPATA33. Interacts with PPP3CC in a SPATA33-dependent manner. Ubiquitinated by PRKN during mitophagy, leading to its degradation and enhancement of mitophagy. Deubiquitinated by USP30.

Its subcellular location is the mitochondrion outer membrane. It localises to the membrane. The enzyme catalyses chloride(in) = chloride(out). It carries out the reaction K(+)(in) = K(+)(out). It catalyses the reaction a 1,2-diacyl-sn-glycero-3-phospho-L-serine(in) = a 1,2-diacyl-sn-glycero-3-phospho-L-serine(out). The catalysed reaction is a 1,2-diacyl-sn-glycero-3-phosphocholine(in) = a 1,2-diacyl-sn-glycero-3-phosphocholine(out). The enzyme catalyses a 1,2-diacyl-sn-glycero-3-phospho-(1D-myo-inositol)(in) = a 1,2-diacyl-sn-glycero-3-phospho-(1D-myo-inositol)(out). Functionally, non-selective voltage-gated ion channel that mediates the transport of anions and cations through the mitochondrion outer membrane and plasma membrane. The channel adopts an open conformation at zero mV and a closed conformation at both positive and negative potentials. There are two populations of channels; the main that functions in a lower open-state conductance with lower ion selectivity, that switch, in a voltage-dependent manner, from the open to a low-conducting 'closed' state and the other that has a normal ion selectivity in the typical high conductance, 'open' state. Binds various lipids, including the sphingolipid ceramide, the phospholipid phosphatidylcholine, and the sterols cholesterol and oxysterol. Binding of ceramide promotes the mitochondrial outer membrane permeabilization (MOMP) apoptotic pathway. Its function is as follows. Catalyzes the scrambling of phospholipids across the outer mitochondrial membrane; the mechanism is unrelated to channel activity and is capable of translocating both anionic and zwitterionic phospholipids. The polypeptide is Non-selective voltage-gated ion channel VDAC2 (Bos taurus (Bovine)).